Reading from the N-terminus, the 227-residue chain is Ribose-5-phosphate isomerase A (227 aa).

Residues 26 to 29 (TGST), 82 to 85 (DGAD), and 95 to 98 (KGGG) each bind substrate. The Proton acceptor role is filled by Glu-104. Lys-122 is a binding site for substrate.

Belongs to the ribose 5-phosphate isomerase family. In terms of assembly, homodimer.

It catalyses the reaction aldehydo-D-ribose 5-phosphate = D-ribulose 5-phosphate. It functions in the pathway carbohydrate degradation; pentose phosphate pathway; D-ribose 5-phosphate from D-ribulose 5-phosphate (non-oxidative stage): step 1/1. In terms of biological role, catalyzes the reversible conversion of ribose-5-phosphate to ribulose 5-phosphate. This chain is Ribose-5-phosphate isomerase A, found in Streptococcus pneumoniae (strain Hungary19A-6).